A 212-amino-acid chain; its full sequence is Pyrrolidone-carboxylate peptidase (212 aa).

Active-site residues include Glu80, Cys143, and His165.

Belongs to the peptidase C15 family. As to quaternary structure, homotetramer.

It is found in the cytoplasm. It catalyses the reaction Release of an N-terminal pyroglutamyl group from a polypeptide, the second amino acid generally not being Pro.. Its function is as follows. Removes 5-oxoproline from various penultimate amino acid residues except L-proline. The polypeptide is Pyrrolidone-carboxylate peptidase (Vibrio vulnificus (strain CMCP6)).